The chain runs to 217 residues: MKFFVDTADVAAIRELNDLGMVDGVTTNPSLILKSGRDILEVTKEICDIVEGPVSAEVVASKAGDMIREGEHLVKIAPNITVKVPLTWDGLRACKVLSSQGHKVNVTLCFSAAQAILAAKAGATFISPFIGRLDDINFDGMELIAQIREIYDNYDFQTQILAASIRSVNHITDAARIGADVITAPPAVIKAMANHVLTDKGLEQFNADWAKTGQKIV.

Residue lysine 83 is the Schiff-base intermediate with substrate of the active site.

It belongs to the transaldolase family. Type 3B subfamily.

The protein localises to the cytoplasm. It carries out the reaction D-sedoheptulose 7-phosphate + D-glyceraldehyde 3-phosphate = D-erythrose 4-phosphate + beta-D-fructose 6-phosphate. It functions in the pathway carbohydrate degradation; pentose phosphate pathway; D-glyceraldehyde 3-phosphate and beta-D-fructose 6-phosphate from D-ribose 5-phosphate and D-xylulose 5-phosphate (non-oxidative stage): step 2/3. In terms of biological role, transaldolase is important for the balance of metabolites in the pentose-phosphate pathway. The chain is Probable transaldolase from Paracoccus denitrificans (strain Pd 1222).